The chain runs to 89 residues: Acylphosphatase (89 aa).

The region spanning 4-89 (CVRCLIAGRV…IPEIQMFEVR (86 aa)) is the Acylphosphatase-like domain. Active-site residues include Arg19 and Asn37.

Belongs to the acylphosphatase family.

The catalysed reaction is an acyl phosphate + H2O = a carboxylate + phosphate + H(+). This is Acylphosphatase (acyP) from Nitrosococcus oceani (strain ATCC 19707 / BCRC 17464 / JCM 30415 / NCIMB 11848 / C-107).